The sequence spans 79 residues: uncharacterized protein (79 aa).

This is an uncharacterized protein from Bacillus subtilis (strain 168).